Reading from the N-terminus, the 937-residue chain is Hyphally-regulated protein (937 aa).

Residues 1 to 20 (MKVVSNFIFTILLTLNLSAA) form the signal peptide. A glycan (N-linked (GlcNAc...) asparagine) is linked at N16. A helical membrane pass occupies residues 42–62 (VHSGATWAILGTTLCSFFGGL). Residue N236 is glycosylated (N-linked (GlcNAc...) asparagine). The tract at residues 332–483 (SAPESESDLN…QSITSSPGQS (152 aa)) is disordered. Over residues 344–392 (TTSSIETSSYSSAATESSVVSESSSAVDSLTSSSLSSKSESSDVVSSTT) the composition is skewed to low complexity. The segment covering 393–414 (NIESSSTAIETTMNSESSTDAG) has biased composition (polar residues). Residues 415-475 (SSSISQSESS…SNALSSTEQS (61 aa)) show a composition bias toward low complexity. N-linked (GlcNAc...) asparagine glycans are attached at residues N449, N488, N580, N585, N595, and N603. The segment covering 567 to 590 (DATTTTTTSTGGDNSTGGNESGSN) has biased composition (low complexity). Positions 567-857 (DATTTTTTST…VANPVTTSTE (291 aa)) are disordered. A compositionally biased stretch (gly residues) spans 591 to 609 (HGPGNGSTEGSGNGSGAGS). Copy 1 of the repeat occupies 610–613 (NEGS). The tract at residues 610–753 (NEGSQSGPNN…GAGNGSNEGS (144 aa)) is 7 X 4 AA repeats of N-E-G-S. N-linked (GlcNAc...) asparagine glycosylation is found at N619, N631, N641, and N649. Composition is skewed to gly residues over residues 619–631 (NGSG…GSNN) and 641–665 (NGSG…GSGS). 4 tandem repeats follow at residues 666–669 (NEGS), 680–683 (NEGS), 690–693 (NEGS), and 698–701 (NEGS). The segment covering 666-682 (NEGSQSGSGSQPGPNEG) has biased composition (low complexity). Positions 699-725 (EGSGSGSGSGSNNGSGSGSQSGSGSGS) are enriched in gly residues. A glycan (N-linked (GlcNAc...) asparagine) is linked at N711. Positions 726-742 (QSGSESGSNSGSNEGSN) are enriched in low complexity. Repeat 6 spans residues 738–741 (NEGS). Positions 743–801 (PGAGNGSNEGSGQGSGNGSEAGSGQGSGPNNGSGSGHNDGSGSGSNQGSNPGAGSGSGS) are enriched in gly residues. N-linked (GlcNAc...) asparagine glycosylation occurs at N747. Repeat unit 7 spans residues 750–753 (NEGS). N759 and N773 each carry an N-linked (GlcNAc...) asparagine glycan. Positions 802-814 (ESGSKAGSHSGSN) are enriched in low complexity. Residues 817–829 (AKTDSIEGFHTES) are compositionally biased toward basic and acidic residues. A compositionally biased stretch (polar residues) spans 841–851 (ATVTGNSVANP). Residues N897 and N913 are each glycosylated (N-linked (GlcNAc...) asparagine). N913 is lipidated: GPI-anchor amidated asparagine. Positions 914–937 (GSSIVTGGKSILFGLIVSMVVLFM) are cleaved as a propeptide — removed in mature form.

The protein localises to the cell membrane. It localises to the secreted. The protein resides in the cell wall. Nonessential component of the hyphal cell wall. The chain is Hyphally-regulated protein (HYR1) from Candida albicans (Yeast).